Reading from the N-terminus, the 216-residue chain is Probable succinyl-CoA:3-ketoacid coenzyme A transferase subunit B (216 aa).

Glu47 is an active-site residue.

The protein belongs to the 3-oxoacid CoA-transferase subunit B family. Heterodimer of a subunit A and a subunit B.

It carries out the reaction a 3-oxo acid + succinyl-CoA = a 3-oxoacyl-CoA + succinate. The sequence is that of Probable succinyl-CoA:3-ketoacid coenzyme A transferase subunit B (scoB) from Bacillus subtilis (strain 168).